The chain runs to 1382 residues: MPAYFQRPENALKRANEFLEVGKKQPALDVLYDVMKSKKHRTWQKIHEPIMLKYLELCVDLRKSHLAKEGLYQYKNICQQVNIKSLEDVVRAYLKMAEEKTEAAKEESQQMVLDIEDLDNIQTPESVLLSAVSGEDTQDRTDRLLLTPWVKFLWESYRQCLDLLRNNSRVERLYHDIAQQAFKFCLQYTRKAEFRKLCDNLRMHLSQIQRHHNQSTAINLNNPESQSMHLETRLVQLDSAISMELWQEAFKAVEDIHGLFSLSKKPPKPQLMANYYNKVSTVFWKSGNALFHASTLHRLYHLSREMRKNLTQDEMQRMSTRVLLATLSIPITPERTDIARLLDMDGIIVEKQRRLATLLGLQAPPTRIGLINDMVRFNVLQYVVPEVKDLYNWLEVEFNPLKLCERVTKVLNWVREQPEKEPELQQYVPQLQNNTILRLLQQVSQIYQSIEFSRLTSLVPFVDAFQLERAIVDAARHCDLQVRIDHTSRTLSFGSDLNYATREDAPIGPHLQSMPSEQIRNQLTAMSSVLAKALEVIKPAHILQEKEEQHQLAVTAYLKNSRKEHQRILARRQTIEERKERLESLNIQREKEELEQREAELQKVRKAEEERLRQEAKEREKERILQEHEQIKKKTVRERLEQIKKTELGAKAFKDIDIEDLEELDPDFIMAKQVEQLEKEKKELQERLKNQEKKIDYFERAKRLEEIPLIKSAYEEQRIKDMDLWEQQEEERITTMQLEREKALEHKNRMSRMLEDRDLFVMRLKAARQSVYEEKLKQFEERLAEERHNRLEERKRQRKEERRITYYREKEEEEQRRAEEQMLKEREERERAERAKREEELREYQERVKKLEEVERKKRQRELEIEERERRREEERRLGDSSLSRKDSRWGDRDSEGTWRKGPEADSEWRRGPPEKEWRRGEGRDEDRSHRRDEERPRRLGDDEDREPSLRPDDDRVPRRGMDDDRGPRRGPEEDRFSRRGADDDRPSWRNTDDDRPPRRIADEDRGNWRHADDDRPPRRGLDEDRGSWRTADEDRGPRRGMDDDRGPRRGGADDERSSWRNADDDRGPRRGLDDDRGPRRGMDDDRGPRRGMDDDRGPRRGMDDDRGPRRGLDDDRGPWRNADDDRIPRRGAEDDRGPWRNMDDDRLSRRADDDRFPRRGDDSRPGPWRPLVKPGGWREKEKAREESWGPPRESRPSEEREWDREKERDRDNQDREENDKDPERERDRERDVDREDRFRRPRDEGGWRRGPAEESSSWRDSSRRDDRDRDDRRRERDDRRDLRERRDLRDDRDRRGPPLRSEREEVSSWRRADDRKDDRVEERDPPRRVPPPALSRDRERDRDREREGEKEKASWRAEKDRESLRRTKNETDEDGWTTVRR.

The residue at position 68 (lysine 68) is an N6-acetyllysine. Positions 82–120 form a coiled coil; that stretch reads NIKSLEDVVRAYLKMAEEKTEAAKEESQQMVLDIEDLDN. Positions 315–498 constitute a PCI domain; that stretch reads MQRMSTRVLL…RTLSFGSDLN (184 aa). Serine 492 and serine 584 each carry phosphoserine. The interval 664 to 835 is interaction with EIF3B; sequence LDPDFIMAKQ…REERERAERA (172 aa). Disordered stretches follow at residues 810 to 844 and 866 to 1382; these read KEEEEQRRAEEQMLKEREERERAERAKREEELREY and EERE…TVRR. Basic and acidic residues-rich tracts occupy residues 866–1165, 1177–1328, and 1336–1371; these read EERE…DDSR, GWRE…DPPR, and SRDRERDRDREREGEKEKASWRAEKDRESLRRTKNE. A phosphoserine mark is found at serine 881, serine 882, and serine 895. Residues 925 to 934 form repeat 1; the sequence is DEDRSHRRDE. The 25 X 10 AA approximate tandem repeats of [DE]-[DE]-[DE]-R-[SEVGFPILV]-[HPSN]-[RSW]-[RL]-[DRGTIHN]-[EPMANLGDT] stretch occupies residues 925–1172; that stretch reads DEDRSHRRDE…DSRPGPWRPL (248 aa). A 2; truncated repeat occupies 935–942; that stretch reads ERPRRLGD. A run of 20 repeats spans residues 943–952, 953–962, 963–972, 973–982, 983–992, 993–1002, 1003–1012, 1013–1022, 1023–1032, 1033–1042, 1043–1052, 1054–1063, 1064–1073, 1074–1083, 1084–1093, 1094–1103, 1104–1113, 1114–1123, 1124–1133, and 1134–1143. The residue at position 949 (serine 949) is a Phosphoserine. Serine 1028 carries the post-translational modification Phosphoserine. The 23; truncated repeat unit spans residues 1144–1152; the sequence is DDDRLSRRA. The stretch at 1153 to 1162 is repeat 24; it reads DDDRFPRRGD. A 25; approximate repeat occupies 1163 to 1172; that stretch reads DSRPGPWRPL. Phosphoserine is present on residues serine 1188, serine 1198, serine 1262, serine 1336, and serine 1364.

Interacts with EIF4G1. Component of the eukaryotic translation initiation factor 3 (eIF-3) complex, which is composed of 13 subunits: EIF3A, EIF3B, EIF3C, EIF3D, EIF3E, EIF3F, EIF3G, EIF3H, EIF3I, EIF3J, EIF3K, EIF3L and EIF3M. The eIF-3 complex appears to include 3 stable modules: module A is composed of EIF3A, EIF3B, EIF3G and EIF3I; module B is composed of EIF3F, EIF3H, and EIF3M; and module C is composed of EIF3C, EIF3D, EIF3E, EIF3L and EIF3K. EIF3C of module C binds EIF3B of module A and EIF3H of module B, thereby linking the three modules. EIF3J is a labile subunit that binds to the eIF-3 complex via EIF3B. The eIF-3 complex interacts with RPS6KB1 under conditions of nutrient depletion. Mitogenic stimulation leads to binding and activation of a complex composed of MTOR and RPTOR, leading to phosphorylation and release of RPS6KB1 and binding of EIF4B to eIF-3. Also interacts with KRT7 and PIWIL2. In terms of processing, phosphorylated. Phosphorylation is enhanced upon serum stimulation.

The protein resides in the cytoplasm. In terms of biological role, RNA-binding component of the eukaryotic translation initiation factor 3 (eIF-3) complex, which is required for several steps in the initiation of protein synthesis. The eIF-3 complex associates with the 40S ribosome and facilitates the recruitment of eIF-1, eIF-1A, eIF-2:GTP:methionyl-tRNAi and eIF-5 to form the 43S pre-initiation complex (43S PIC). The eIF-3 complex stimulates mRNA recruitment to the 43S PIC and scanning of the mRNA for AUG recognition. The eIF-3 complex is also required for disassembly and recycling of post-termination ribosomal complexes and subsequently prevents premature joining of the 40S and 60S ribosomal subunits prior to initiation. The eIF-3 complex specifically targets and initiates translation of a subset of mRNAs involved in cell proliferation, including cell cycling, differentiation and apoptosis, and uses different modes of RNA stem-loop binding to exert either translational activation or repression. (Microbial infection) Essential for the initiation of translation on type-1 viral ribosomal entry sites (IRESs), like for HCV, PV, EV71 or BEV translation. Its function is as follows. (Microbial infection) In case of FCV infection, plays a role in the ribosomal termination-reinitiation event leading to the translation of VP2. The chain is Eukaryotic translation initiation factor 3 subunit A from Homo sapiens (Human).